A 224-amino-acid chain; its full sequence is Ribose-5-phosphate isomerase A (224 aa).

Substrate contacts are provided by residues 32-35 (TGST), 85-88 (DGAD), and 98-101 (KGGG). E107 functions as the Proton acceptor in the catalytic mechanism. K125 is a substrate binding site.

It belongs to the ribose 5-phosphate isomerase family. As to quaternary structure, homodimer.

It carries out the reaction aldehydo-D-ribose 5-phosphate = D-ribulose 5-phosphate. It functions in the pathway carbohydrate degradation; pentose phosphate pathway; D-ribose 5-phosphate from D-ribulose 5-phosphate (non-oxidative stage): step 1/1. Functionally, catalyzes the reversible conversion of ribose-5-phosphate to ribulose 5-phosphate. The chain is Ribose-5-phosphate isomerase A from Pseudomonas putida (strain W619).